The primary structure comprises 211 residues: Protein-L-isoaspartate O-methyltransferase (211 aa).

S62 is a catalytic residue.

This sequence belongs to the methyltransferase superfamily. L-isoaspartyl/D-aspartyl protein methyltransferase family.

Its subcellular location is the cytoplasm. It catalyses the reaction [protein]-L-isoaspartate + S-adenosyl-L-methionine = [protein]-L-isoaspartate alpha-methyl ester + S-adenosyl-L-homocysteine. Functionally, catalyzes the methyl esterification of L-isoaspartyl residues in peptides and proteins that result from spontaneous decomposition of normal L-aspartyl and L-asparaginyl residues. It plays a role in the repair and/or degradation of damaged proteins. This is Protein-L-isoaspartate O-methyltransferase from Shewanella loihica (strain ATCC BAA-1088 / PV-4).